The sequence spans 508 residues: Cobyric acid synthase (508 aa).

The GATase cobBQ-type domain occupies 255-454 (ELNIAVLKLP…LHGVFESGPW (200 aa)). Cys-336 (nucleophile) is an active-site residue. His-446 is a catalytic residue.

The protein belongs to the CobB/CobQ family. CobQ subfamily.

The protein operates within cofactor biosynthesis; adenosylcobalamin biosynthesis. Functionally, catalyzes amidations at positions B, D, E, and G on adenosylcobyrinic A,C-diamide. NH(2) groups are provided by glutamine, and one molecule of ATP is hydrogenolyzed for each amidation. The chain is Cobyric acid synthase from Synechococcus sp. (strain CC9311).